The sequence spans 540 residues: Chaperonin GroEL 3 (540 aa).

Residues 30-33 (TLGP), Lys51, 87-91 (DGTTT), Gly415, 479-481 (NAA), and Asp495 contribute to the ATP site.

The protein belongs to the chaperonin (HSP60) family. In terms of assembly, forms a cylinder of 14 subunits composed of two heptameric rings stacked back-to-back. Interacts with the co-chaperonin GroES.

The protein localises to the cytoplasm. It carries out the reaction ATP + H2O + a folded polypeptide = ADP + phosphate + an unfolded polypeptide.. In terms of biological role, together with its co-chaperonin GroES, plays an essential role in assisting protein folding. The GroEL-GroES system forms a nano-cage that allows encapsulation of the non-native substrate proteins and provides a physical environment optimized to promote and accelerate protein folding. This Burkholderia cenocepacia (strain HI2424) protein is Chaperonin GroEL 3.